A 162-amino-acid polypeptide reads, in one-letter code: Corticoliberin (162 aa).

The signal sequence occupies residues 1–24 (MKFQLWVSTGILLVSLLPCHECRA). The propeptide occupies 25-119 (FIKSPASSPG…QEDPTEKAKR (95 aa)). The disordered stretch occupies residues 91-122 (SQPGMRAASLDGADSPYSAQEDPTEKAKRAEE). Positions 113 to 122 (PTEKAKRAEE) are enriched in basic and acidic residues. An Isoleucine amide modification is found at Ile-160.

Belongs to the sauvagine/corticotropin-releasing factor/urotensin I family.

It localises to the secreted. Functionally, this hormone from hypothalamus regulates the release of corticotropin from pituitary gland. The chain is Corticoliberin (crh) from Xenopus laevis (African clawed frog).